A 273-amino-acid chain; its full sequence is Energy-coupling factor transporter ATP-binding protein EcfA (273 aa).

Residues 2 to 237 (ISIRDLTYFY…RASLLALGLA (236 aa)) enclose the ABC transporter domain. 36–43 (GRNGSGKS) contacts ATP.

The protein belongs to the ABC transporter superfamily. Energy-coupling factor EcfA family. Forms a stable energy-coupling factor (ECF) transporter complex composed of 2 membrane-embedded substrate-binding proteins (S component), 2 ATP-binding proteins (A component) and 2 transmembrane proteins (T component).

It is found in the cell membrane. ATP-binding (A) component of a common energy-coupling factor (ECF) ABC-transporter complex. Unlike classic ABC transporters this ECF transporter provides the energy necessary to transport a number of different substrates. The polypeptide is Energy-coupling factor transporter ATP-binding protein EcfA (Syntrophomonas wolfei subsp. wolfei (strain DSM 2245B / Goettingen)).